Reading from the N-terminus, the 99-residue chain is DNA-directed RNA polymerase subunit omega (99 aa).

The protein belongs to the RNA polymerase subunit omega family. In terms of assembly, the RNAP catalytic core consists of 2 alpha, 1 beta, 1 beta' and 1 omega subunit. When a sigma factor is associated with the core the holoenzyme is formed, which can initiate transcription.

The enzyme catalyses RNA(n) + a ribonucleoside 5'-triphosphate = RNA(n+1) + diphosphate. Its function is as follows. Promotes RNA polymerase assembly. Latches the N- and C-terminal regions of the beta' subunit thereby facilitating its interaction with the beta and alpha subunits. This chain is DNA-directed RNA polymerase subunit omega (rpoZ), found in Xylella fastidiosa (strain 9a5c).